The sequence spans 296 residues: ATP synthase gamma chain (296 aa).

The protein belongs to the ATPase gamma chain family. As to quaternary structure, F-type ATPases have 2 components, CF(1) - the catalytic core - and CF(0) - the membrane proton channel. CF(1) has five subunits: alpha(3), beta(3), gamma(1), delta(1), epsilon(1). CF(0) has three main subunits: a, b and c.

It localises to the cell inner membrane. Functionally, produces ATP from ADP in the presence of a proton gradient across the membrane. The gamma chain is believed to be important in regulating ATPase activity and the flow of protons through the CF(0) complex. The protein is ATP synthase gamma chain of Methylorubrum extorquens (strain CM4 / NCIMB 13688) (Methylobacterium extorquens).